A 131-amino-acid chain; its full sequence is Plastocyanin (131 aa).

Residues Met1 to Ala34 form the signal peptide. Residues Ala35 to Glu131 form the Plastocyanin-like domain. Residues His73, Cys116, His119, and Met124 each contribute to the Cu cation site.

Belongs to the plastocyanin family. Requires Cu(2+) as cofactor.

The protein localises to the cellular thylakoid membrane. Functionally, participates in electron transfer between P700 and the cytochrome b6-f complex in photosystem I. This is Plastocyanin (petE) from Prochlorothrix hollandica.